Consider the following 394-residue polypeptide: Deoxyguanosinetriphosphate triphosphohydrolase-like protein (394 aa).

The interval 1 to 34 (MSSSPFFVPRAPYAEDPAKSRGRRFPEDESRTRT) is disordered. Over residues 16–34 (DPAKSRGRRFPEDESRTRT) the composition is skewed to basic and acidic residues. In terms of domain architecture, HD spans 70–210 (RLTHSLEVAQ…AALADDIAYN (141 aa)).

This sequence belongs to the dGTPase family. Type 2 subfamily.

The sequence is that of Deoxyguanosinetriphosphate triphosphohydrolase-like protein from Caulobacter sp. (strain K31).